Reading from the N-terminus, the 455-residue chain is Major facilitator superfamily domain-containing protein 10 (455 aa).

Transmembrane regions (helical) follow at residues 27–47 (VVFL…PLLP), 86–106 (VLFG…CAPL), 113–135 (CLGR…AVWA), 148–168 (LIGG…ADLG), 176–196 (GMAV…MLGA), 202–222 (MAPW…FCFL), 275–295 (LGLV…TLSF), 310–327 (KMFF…GAYA), 336–356 (VAAV…IGWG), 359–379 (LPVL…VVPC), and 421–441 (LAGA…PFFL).

Belongs to the major facilitator superfamily. In terms of tissue distribution, expressed in luminal membrane of renal tubules (at protein level). Detected in all tissues tested with higher expression in heart, splee, kidney, leukocytes and prostate.

It localises to the nucleus inner membrane. It is found in the cell membrane. Probable organic anion transporter which may serve as a transporter for some non-steroidal anti-inflammatory drugs (NSAIDs) as well as other organic anions across the luminal membranes of renal proximal tubules at the final excretion step into the urine. In Homo sapiens (Human), this protein is Major facilitator superfamily domain-containing protein 10 (MFSD10).